The primary structure comprises 281 residues: 4-diphosphocytidyl-2-C-methyl-D-erythritol kinase (281 aa).

Lys11 is a catalytic residue. Residue 95–105 (PVAAGLGGGSS) coordinates ATP. Asp137 is a catalytic residue.

The protein belongs to the GHMP kinase family. IspE subfamily.

The enzyme catalyses 4-CDP-2-C-methyl-D-erythritol + ATP = 4-CDP-2-C-methyl-D-erythritol 2-phosphate + ADP + H(+). Its pathway is isoprenoid biosynthesis; isopentenyl diphosphate biosynthesis via DXP pathway; isopentenyl diphosphate from 1-deoxy-D-xylulose 5-phosphate: step 3/6. Catalyzes the phosphorylation of the position 2 hydroxy group of 4-diphosphocytidyl-2C-methyl-D-erythritol. This Geobacter metallireducens (strain ATCC 53774 / DSM 7210 / GS-15) protein is 4-diphosphocytidyl-2-C-methyl-D-erythritol kinase.